The sequence spans 166 residues: Protein YciF (166 aa).

Homodimer.

This Escherichia coli (strain K12) protein is Protein YciF (yciF).